The primary structure comprises 474 residues: L-arabinose isomerase 2 (474 aa).

Mn(2+) contacts are provided by E306, E331, H348, and H447.

The protein belongs to the arabinose isomerase family. Mn(2+) serves as cofactor.

The catalysed reaction is beta-L-arabinopyranose = L-ribulose. It functions in the pathway carbohydrate degradation; L-arabinose degradation via L-ribulose; D-xylulose 5-phosphate from L-arabinose (bacterial route): step 1/3. Catalyzes the conversion of L-arabinose to L-ribulose. The polypeptide is L-arabinose isomerase 2 (Bacillus licheniformis (strain ATCC 14580 / DSM 13 / JCM 2505 / CCUG 7422 / NBRC 12200 / NCIMB 9375 / NCTC 10341 / NRRL NRS-1264 / Gibson 46)).